The chain runs to 351 residues: N(4)-bis(aminopropyl)spermidine synthase (351 aa).

The protein belongs to the branched-chain polyamine synthase family.

It is found in the cytoplasm. It carries out the reaction 2 S-adenosyl 3-(methylsulfanyl)propylamine + spermidine = N(4)-bis(aminopropyl)spermidine + 2 S-methyl-5'-thioadenosine + 2 H(+). It functions in the pathway amine and polyamine biosynthesis. Its function is as follows. Involved in the biosynthesis of branched-chain polyamines, which support the growth of thermophiles under high-temperature conditions. Catalyzes the sequential condensation of spermidine with the aminopropyl groups of decarboxylated S-adenosylmethionines to produce N(4)-bis(aminopropyl)spermidine via N(4)-aminopropylspermidine. Can also use spermine to produce N(4)-aminopropylspermine. In Thermococcus kodakarensis (strain ATCC BAA-918 / JCM 12380 / KOD1) (Pyrococcus kodakaraensis (strain KOD1)), this protein is N(4)-bis(aminopropyl)spermidine synthase.